The primary structure comprises 380 residues: Flap endonuclease 1 (380 aa).

An N-domain region spans residues 1–104 (MGIHGLAKLI…AELEKRGERR (104 aa)). Mg(2+) is bound at residue aspartate 34. Residues arginine 47 and arginine 70 each coordinate DNA. Residues aspartate 86, glutamate 158, glutamate 160, aspartate 179, and aspartate 181 each contribute to the Mg(2+) site. The tract at residues 122 to 253 (NIDKFSKRLV…KRAIDLIRQH (132 aa)) is I-domain. Glutamate 158 is a DNA binding site. Glycine 231 and aspartate 233 together coordinate DNA. Aspartate 233 provides a ligand contact to Mg(2+). The segment at 327 to 380 (KMMKSRQGSTQGRLDSFFSVTGSLSSKRKEPETKGSAKKKQKTGATPGKFRKGK) is disordered. The segment covering 332–351 (RQGSTQGRLDSFFSVTGSLS) has biased composition (polar residues). Residues 336–344 (TQGRLDSFF) are interaction with PCNA.

It belongs to the XPG/RAD2 endonuclease family. FEN1 subfamily. As to quaternary structure, interacts with PCNA. Three molecules of fen1 bind to one PCNA trimer with each molecule binding to one PCNA monomer. PCNA stimulates the nuclease activity without altering cleavage specificity. Requires Mg(2+) as cofactor. Phosphorylated. Phosphorylation upon DNA damage induces relocalization to the nuclear plasma.

The protein resides in the nucleus. It is found in the nucleolus. It localises to the nucleoplasm. The protein localises to the mitochondrion. Structure-specific nuclease with 5'-flap endonuclease and 5'-3' exonuclease activities involved in DNA replication and repair. During DNA replication, cleaves the 5'-overhanging flap structure that is generated by displacement synthesis when DNA polymerase encounters the 5'-end of a downstream Okazaki fragment. It enters the flap from the 5'-end and then tracks to cleave the flap base, leaving a nick for ligation. Also involved in the long patch base excision repair (LP-BER) pathway, by cleaving within the apurinic/apyrimidinic (AP) site-terminated flap. Acts as a genome stabilization factor that prevents flaps from equilibrating into structures that lead to duplications and deletions. Also possesses 5'-3' exonuclease activity on nicked or gapped double-stranded DNA, and exhibits RNase H activity. Also involved in replication and repair of rDNA and in repairing mitochondrial DNA. The chain is Flap endonuclease 1 (fen1) from Xiphophorus maculatus (Southern platyfish).